The primary structure comprises 171 residues: Peptide deformylase (171 aa).

Fe cation-binding residues include Cys91 and His133. The active site involves Glu134. Residue His137 coordinates Fe cation.

This sequence belongs to the polypeptide deformylase family. Fe(2+) is required as a cofactor.

The catalysed reaction is N-terminal N-formyl-L-methionyl-[peptide] + H2O = N-terminal L-methionyl-[peptide] + formate. Its function is as follows. Removes the formyl group from the N-terminal Met of newly synthesized proteins. Requires at least a dipeptide for an efficient rate of reaction. N-terminal L-methionine is a prerequisite for activity but the enzyme has broad specificity at other positions. This chain is Peptide deformylase, found in Mannheimia succiniciproducens (strain KCTC 0769BP / MBEL55E).